Consider the following 461-residue polypeptide: Kremen protein 2 (461 aa).

The signal sequence occupies residues 1–24 (MGTPHLQGFLLLFPLLLRLHGASA). Over 25 to 363 (GSLHSPGLSE…SPKPGAAQAS (339 aa)) the chain is Extracellular. The 85-residue stretch at 34–118 (ECFQVNGADY…YWRYCDIPTC (85 aa)) folds into the Kringle domain. Cystine bridges form between Cys-35/Cys-118, Cys-59/Cys-99, and Cys-88/Cys-113. The N-linked (GlcNAc...) asparagine glycan is linked to Asn-48. Residues 120–214 (MPGYLGCFVD…DGRLGIYEVS (95 aa)) form the WSC domain. A disulfide bridge connects residues Cys-218 and Cys-244. Residues 218 to 325 (CQGNWSAPQG…QGFALTYRGL (108 aa)) form the CUB domain. Asn-221, Asn-243, and Asn-350 each carry an N-linked (GlcNAc...) asparagine glycan. The disordered stretch occupies residues 329 to 357 (VEGRASPEDSTESLAGDPDGANASCSPKP). Residues 364-386 (IGARVFSTVTAFSVLLLLLLSLL) form a helical membrane-spanning segment. The Cytoplasmic segment spans residues 387–461 (RLLRRRSCLL…SSLRSLVSAL (75 aa)). A disordered region spans residues 429-452 (CPPGDSQAEGPAAGYRPLSASSQS).

Interacts with ERLEC1. Forms a ternary complex with DKK1 and LRP6.

The protein resides in the membrane. Receptor for Dickkopf proteins. Cooperates with DKK1/2 to inhibit Wnt/beta-catenin signaling by promoting the endocytosis of Wnt receptors LRP5 and LRP6. Plays a role in limb development; attenuates Wnt signaling in the developing limb to allow normal limb patterning and can also negatively regulate bone formation. This Mus musculus (Mouse) protein is Kremen protein 2 (Kremen2).